A 513-amino-acid polypeptide reads, in one-letter code: Melianol synthase CYP71BQ4 (513 aa).

Residues Met-10–Ile-30 form a helical membrane-spanning segment. Heme is bound at residue Cys-451.

The protein belongs to the cytochrome P450 family. The cofactor is heme. Accumulates in mature fruits and in juice vesicles.

It is found in the membrane. It carries out the reaction dihydroniloticin + 2 reduced [NADPH--hemoprotein reductase] + 2 O2 = melianol + 2 oxidized [NADPH--hemoprotein reductase] + 3 H2O + 2 H(+). It participates in secondary metabolite biosynthesis; terpenoid biosynthesis. Functionally, monooxygenase involved in the biosynthesis of limonoids triterpene natural products such as limonin, a compound with insecticidal activity responsible for the bitter taste in citrus. Catalyzes the conversion of dihydroniloticin to the protolimonoid melianol. In Citrus sinensis (Sweet orange), this protein is Melianol synthase CYP71BQ4.